The sequence spans 207 residues: Metalloproteinase inhibitor 1 (207 aa).

An N-terminal signal peptide occupies residues 1–23 (MAPLAALASSMLLLLWLVAPSRA). Residue Cys24 coordinates Zn(2+). The segment at 24-27 (CTCV) is involved in metalloproteinase-binding. 6 disulfides stabilise this stretch: Cys24–Cys93, Cys26–Cys122, Cys36–Cys147, Cys150–Cys197, Cys155–Cys160, and Cys168–Cys189. An NTR domain is found at 24-147 (CTCVPPHPQT…GFTKTYAAGC (124 aa)). Asn53 is a glycosylation site (N-linked (GlcNAc...) asparagine). Residues 90–91 (ES) form an involved in metalloproteinase-binding region. N-linked (GlcNAc...) asparagine glycosylation is present at Asn101. The residue at position 178 (Ser178) is a Phosphoserine.

The protein belongs to the protease inhibitor I35 (TIMP) family. Interacts with MMP1, MMP3, MMP10 and MMP13, but has only very low affinity for MMP14. Interacts with CD63; identified in a complex with CD63 and ITGB1. In terms of processing, the activity of TIMP1 is dependent on the presence of disulfide bonds. Post-translationally, N-glycosylated.

The protein localises to the secreted. Functionally, metalloproteinase inhibitor that functions by forming one to one complexes with target metalloproteinases, such as collagenases, and irreversibly inactivates them by binding to their catalytic zinc cofactor. Acts on MMP1, MMP2, MMP3, MMP7, MMP8, MMP9, MMP10, MMP11, MMP12, MMP13 and MMP16. Does not act on MMP14. Also functions as a growth factor that regulates cell differentiation, migration and cell death and activates cellular signaling cascades via CD63 and ITGB1. Plays a role in integrin signaling. The polypeptide is Metalloproteinase inhibitor 1 (TIMP1) (Oryctolagus cuniculus (Rabbit)).